Here is a 101-residue protein sequence, read N- to C-terminus: Transcription and mRNA export factor SUS1 (101 aa).

It belongs to the ENY2 family. Component of the nuclear pore complex (NPC)-associated TREX-2 complex (transcription and export complex 2), composed of at least SUS1, SAC3, THP1, SEM1, and CDC31. TREX-2 contains 2 SUS1 chains. The TREX-2 complex interacts with the nucleoporin NUP1. Component of the 1.8 MDa SAGA transcription coactivator-HAT complex. SAGA is built of 5 distinct domains with specialized functions. Within the SAGA complex, SUS1, SGF11, SGF73 and UBP8 form an additional subcomplex of SAGA called the DUB module (deubiquitination module). Interacts directly with THP1, SAC3, SGF11, and with the RNA polymerase II.

It localises to the nucleus. The protein localises to the nucleoplasm. It is found in the cytoplasm. Its subcellular location is the P-body. Its function is as follows. Involved in mRNA export coupled transcription activation by association with both the TREX-2 and the SAGA complexes. At the promoters, SAGA is required for recruitment of the basal transcription machinery. It influences RNA polymerase II transcriptional activity through different activities such as TBP interaction and promoter selectivity, interaction with transcription activators, and chromatin modification through histone acetylation and deubiquitination. Within the SAGA complex, participates in a subcomplex required for deubiquitination of H2B and for the maintenance of steady-state H3 methylation levels. The TREX-2 complex functions in docking export-competent ribonucleoprotein particles (mRNPs) to the nuclear entrance of the nuclear pore complex (nuclear basket). TREX-2 participates in mRNA export and accurate chromatin positioning in the nucleus by tethering genes to the nuclear periphery. May also be involved in cytoplasmic mRNA decay by interaction with components of P-bodies. This Debaryomyces hansenii (strain ATCC 36239 / CBS 767 / BCRC 21394 / JCM 1990 / NBRC 0083 / IGC 2968) (Yeast) protein is Transcription and mRNA export factor SUS1.